We begin with the raw amino-acid sequence, 221 residues long: Orotate phosphoribosyltransferase (221 aa).

Lysine 27 contributes to the 5-phospho-alpha-D-ribose 1-diphosphate binding site. 35-36 (FF) serves as a coordination point for orotate. Residues 75-76 (YK), arginine 102, lysine 103, lysine 106, histidine 108, and 128-136 (DDVLTAGTA) contribute to the 5-phospho-alpha-D-ribose 1-diphosphate site. Threonine 132 and arginine 160 together coordinate orotate.

Belongs to the purine/pyrimidine phosphoribosyltransferase family. PyrE subfamily. Homodimer. Mg(2+) is required as a cofactor.

The enzyme catalyses orotidine 5'-phosphate + diphosphate = orotate + 5-phospho-alpha-D-ribose 1-diphosphate. Its pathway is pyrimidine metabolism; UMP biosynthesis via de novo pathway; UMP from orotate: step 1/2. Its function is as follows. Catalyzes the transfer of a ribosyl phosphate group from 5-phosphoribose 1-diphosphate to orotate, leading to the formation of orotidine monophosphate (OMP). The chain is Orotate phosphoribosyltransferase from Dichelobacter nodosus (strain VCS1703A).